Reading from the N-terminus, the 74-residue chain is Guanine nucleotide-binding protein G(T) subunit gamma-T1 (74 aa).

A Cysteine methyl ester modification is found at Cys-71. Cys-71 is lipidated: S-farnesyl cysteine. Residues 72–74 (VIS) constitute a propeptide, removed in mature form.

The protein belongs to the G protein gamma family. As to quaternary structure, g proteins are composed of 3 units, alpha, beta and gamma. In terms of tissue distribution, retinal rod outer segment.

The protein localises to the cell membrane. Guanine nucleotide-binding proteins (G proteins) are involved as a modulator or transducer in various transmembrane signaling systems. The beta and gamma chains are required for the GTPase activity, for replacement of GDP by GTP, and for G protein-effector interaction. The chain is Guanine nucleotide-binding protein G(T) subunit gamma-T1 (GNGT1) from Bos taurus (Bovine).